Consider the following 456-residue polypeptide: Bifunctional protein GlmU (456 aa).

The segment at 1–229 (MLNSAMSVVI…ISETDGVNNR (229 aa)) is pyrophosphorylase. UDP-N-acetyl-alpha-D-glucosamine-binding positions include 11–14 (LAAG), lysine 25, glutamine 76, 81–82 (GT), 103–105 (YGD), glycine 140, glutamate 154, asparagine 169, and asparagine 227. Aspartate 105 is a Mg(2+) binding site. Asparagine 227 serves as a coordination point for Mg(2+). Residues 230–250 (LQLSRLERIYQAEQAEKLLLS) form a linker region. Residues 251–456 (GVMLRDPARF…QGWQRPVKKK (206 aa)) form an N-acetyltransferase region. Positions 333 and 351 each coordinate UDP-N-acetyl-alpha-D-glucosamine. Residue histidine 363 is the Proton acceptor of the active site. The UDP-N-acetyl-alpha-D-glucosamine site is built by tyrosine 366 and asparagine 377. Residues alanine 380, 386–387 (NY), serine 405, alanine 423, and arginine 440 contribute to the acetyl-CoA site.

This sequence in the N-terminal section; belongs to the N-acetylglucosamine-1-phosphate uridyltransferase family. It in the C-terminal section; belongs to the transferase hexapeptide repeat family. In terms of assembly, homotrimer. It depends on Mg(2+) as a cofactor.

It is found in the cytoplasm. The enzyme catalyses alpha-D-glucosamine 1-phosphate + acetyl-CoA = N-acetyl-alpha-D-glucosamine 1-phosphate + CoA + H(+). It carries out the reaction N-acetyl-alpha-D-glucosamine 1-phosphate + UTP + H(+) = UDP-N-acetyl-alpha-D-glucosamine + diphosphate. It functions in the pathway nucleotide-sugar biosynthesis; UDP-N-acetyl-alpha-D-glucosamine biosynthesis; N-acetyl-alpha-D-glucosamine 1-phosphate from alpha-D-glucosamine 6-phosphate (route II): step 2/2. Its pathway is nucleotide-sugar biosynthesis; UDP-N-acetyl-alpha-D-glucosamine biosynthesis; UDP-N-acetyl-alpha-D-glucosamine from N-acetyl-alpha-D-glucosamine 1-phosphate: step 1/1. The protein operates within bacterial outer membrane biogenesis; LPS lipid A biosynthesis. In terms of biological role, catalyzes the last two sequential reactions in the de novo biosynthetic pathway for UDP-N-acetylglucosamine (UDP-GlcNAc). The C-terminal domain catalyzes the transfer of acetyl group from acetyl coenzyme A to glucosamine-1-phosphate (GlcN-1-P) to produce N-acetylglucosamine-1-phosphate (GlcNAc-1-P), which is converted into UDP-GlcNAc by the transfer of uridine 5-monophosphate (from uridine 5-triphosphate), a reaction catalyzed by the N-terminal domain. This is Bifunctional protein GlmU from Salmonella dublin (strain CT_02021853).